The following is a 142-amino-acid chain: Large ribosomal subunit protein mL43 (142 aa).

Belongs to the mitochondrion-specific ribosomal protein mL43 family. Component of the mitochondrial large ribosomal subunit. Mature mitochondrial ribosomes consist of a small (37S) and a large (54S) subunit. The 37S subunit contains at least 33 different proteins and 1 molecule of RNA (15S). The 54S subunit contains at least 45 different proteins and 1 molecule of RNA (21S).

It localises to the mitochondrion. This chain is Large ribosomal subunit protein mL43 (MRPL51), found in Eremothecium gossypii (strain ATCC 10895 / CBS 109.51 / FGSC 9923 / NRRL Y-1056) (Yeast).